An 89-amino-acid chain; its full sequence is MSITAERKSALIKEYATVEGDTGSPEVQVAILTERINNLTEHFKDHKKDNHSRRGLLTMVSSRRSLLDYLKKKDEGRYSKLITSLGIRR.

Belongs to the universal ribosomal protein uS15 family. As to quaternary structure, part of the 30S ribosomal subunit. Forms a bridge to the 50S subunit in the 70S ribosome, contacting the 23S rRNA.

One of the primary rRNA binding proteins, it binds directly to 16S rRNA where it helps nucleate assembly of the platform of the 30S subunit by binding and bridging several RNA helices of the 16S rRNA. Its function is as follows. Forms an intersubunit bridge (bridge B4) with the 23S rRNA of the 50S subunit in the ribosome. The protein is Small ribosomal subunit protein uS15 of Rhizobium johnstonii (strain DSM 114642 / LMG 32736 / 3841) (Rhizobium leguminosarum bv. viciae).